We begin with the raw amino-acid sequence, 258 residues long: Diacetyl reductase [(S)-acetoin forming] (258 aa).

8–32 (LVTGGAQGIGFKIAERLVEDGFKVA) is a binding site for NAD(+). Ser-141 is a binding site for substrate. Tyr-154 acts as the Proton acceptor in catalysis. The active site involves Lys-158.

Belongs to the short-chain dehydrogenases/reductases (SDR) family.

The enzyme catalyses (S)-acetoin + NAD(+) = diacetyl + NADH + H(+). Its function is as follows. Catalyzes the irreversible reduction of 2,3-butanediol to (S)-acetoin in the presence of NADH. This chain is Diacetyl reductase [(S)-acetoin forming] (butA), found in Staphylococcus aureus (strain Mu50 / ATCC 700699).